The following is a 287-amino-acid chain: Bifunctional protein FolD 2 (287 aa).

NADP(+) contacts are provided by residues 166–168 (GAS) and Ile-232.

The protein belongs to the tetrahydrofolate dehydrogenase/cyclohydrolase family. As to quaternary structure, homodimer.

The catalysed reaction is (6R)-5,10-methylene-5,6,7,8-tetrahydrofolate + NADP(+) = (6R)-5,10-methenyltetrahydrofolate + NADPH. The enzyme catalyses (6R)-5,10-methenyltetrahydrofolate + H2O = (6R)-10-formyltetrahydrofolate + H(+). Its pathway is one-carbon metabolism; tetrahydrofolate interconversion. Functionally, catalyzes the oxidation of 5,10-methylenetetrahydrofolate to 5,10-methenyltetrahydrofolate and then the hydrolysis of 5,10-methenyltetrahydrofolate to 10-formyltetrahydrofolate. The protein is Bifunctional protein FolD 2 of Hydrogenovibrio crunogenus (strain DSM 25203 / XCL-2) (Thiomicrospira crunogena).